The chain runs to 181 residues: uncharacterized protein (181 aa).

Residues 1-159 (MTVHHFTFHI…KACWMMQSLT (159 aa)) form the N-acetyltransferase domain.

Belongs to the acetyltransferase family.

This is an uncharacterized protein from Escherichia coli (strain K12).